A 161-amino-acid polypeptide reads, in one-letter code: uncharacterized protein (161 aa).

The protein belongs to the sapovirus VP3 family.

This is an uncharacterized protein from Sapporo virus (isolate GI/Human/Germany/pJG-Sap01) (Hu/Dresden/pJG-Sap01/DE).